The primary structure comprises 2004 residues: Immunoglobulin A1 protease (2004 aa).

The first 42 residues, 1-42 (MEKYFGEKQERFSFRKLSVGLVSATISSLFFMSVLASSSVDA), serve as a signal peptide directing secretion. A propeptide spanning residues 43–99 (QETAGVHYKYVADSELSSEEKKQLVYDIPTYVENDDETYYLVYKLNSQNQLAELPNT) is cleaved from the precursor. An LPXTG sorting signal motif is present at residues 96–100 (LPNTG). Pentaglycyl murein peptidoglycan amidated threonine is present on T99. 2 helical membrane-spanning segments follow: residues 106–125 (QALVAGASLAAMGILIFAVS) and 132–154 (KTVLHLVLVAGIGNGVLVSVHAL). The Extracellular segment spans residues 155–2004 (ENHLLLNYNT…FRSSIFENKK (1850 aa)). Disordered regions lie at residues 194–213 (TTSESEVSNQKSSVATPTKQ), 235–305 (QEQT…NPQD), 373–394 (EIVSTSTTAPSPRIVEKGTKKT), and 422–720 (PELP…PEKT). Composition is skewed to polar residues over residues 197–213 (ESEVSNQKSSVATPTKQ) and 235–246 (QEQTPVSSTKPT). A compositionally biased stretch (basic and acidic residues) spans 276 to 296 (LAEHKNLETKKEEKISPKEKT). The G5 domain maps to 314-393 (KPELLYREET…PRIVEKGTKK (80 aa)). A run of 3 repeats spans residues 419 to 435 (AIQPELPEAVVSDKGEP), 436 to 452 (EVQPTLPEAVVTDKGET), and 453 to 469 (EVQPESPDTVVSDKGEP). The 3 X 17 AA approximate tandem repeats stretch occupies residues 419-469 (AIQPELPEAVVSDKGEPEVQPTLPEAVVTDKGETEVQPESPDTVVSDKGEP). Residues 485-511 (VKPETPVEKTKEQGPEKTEEVPVKPTE) show a composition bias toward basic and acidic residues. Polar residues-rich tracts occupy residues 516-529 (NPNEGTTEGTSIQE) and 538-572 (EESTTNSEKVSPDTSSKNTGEVSSNPSDSTTSVGE). The span at 574–591 (NKPEHNDSKNENSEKTVE) shows a compositional bias: basic and acidic residues. 2 stretches are compositionally biased toward polar residues: residues 618-639 (EETQTNSGKIANENTGEVSNKP) and 648-681 (ESNQPEKNGTATKPENSGNTTSENGQTEPEPSNG). The span at 682-699 (NSTEDVSTESNTSNSNGN) shows a compositional bias: low complexity. Over residues 700–720 (EEIKQENELDPDKKVEEPEKT) the composition is skewed to basic and acidic residues. H1645 is a binding site for Zn(2+). E1646 is an active-site residue. Zn(2+)-binding residues include H1649 and E1669.

The protein belongs to the peptidase M26 family. Zn(2+) is required as a cofactor. The Gram-positive cell-wall anchor motif LPXTG is located in the N-terminal part, in contrast to such motifs in other known streptococcal and staphylococcal proteins. The protease could be cleaved by the sortase and anchored in the membrane via the two potential N-terminal transmembrane domains, whereas the propeptide located prior to the LPXTG motif would remain attached to the cell wall peptidoglycan by an amide bond.

The protein resides in the secreted. The protein localises to the cell wall. It localises to the membrane. It catalyses the reaction Cleavage of Pro-|-Thr bond in the hinge region of the heavy chain of human IgA.. Its function is as follows. Zinc metalloproteinase which cleaves human immunoglobulin A1 (IgA1) in the hinge region, rendering it less efficient in coating the surface of colonizing or invading pneumococci. Strongly contributes to virulence in mice. May be responsible for pneumococcal infection and is potentially involved in distinct stages of pneumococcal disease. The polypeptide is Immunoglobulin A1 protease (iga) (Streptococcus pneumoniae serotype 4 (strain ATCC BAA-334 / TIGR4)).